The primary structure comprises 215 residues: Probable GTP-binding protein EngB (215 aa).

The region spanning 30–204 (EGLEVAFAGR…QMVLAQWLGL (175 aa)) is the EngB-type G domain. GTP contacts are provided by residues 38–45 (GRSNAGKS), 64–68 (GRTQL), 82–85 (DLPG), 149–152 (TKAD), and 182–185 (LFSA). The Mg(2+) site is built by Ser-45 and Thr-66.

This sequence belongs to the TRAFAC class TrmE-Era-EngA-EngB-Septin-like GTPase superfamily. EngB GTPase family. Mg(2+) is required as a cofactor.

Its function is as follows. Necessary for normal cell division and for the maintenance of normal septation. This is Probable GTP-binding protein EngB from Pseudomonas paraeruginosa (strain DSM 24068 / PA7) (Pseudomonas aeruginosa (strain PA7)).